The chain runs to 258 residues: Glutamate racemase (258 aa).

Substrate-binding positions include 11–12 and 43–44; these read DS and YG. Catalysis depends on C74, which acts as the Proton donor/acceptor. A substrate-binding site is contributed by 75-76; sequence NT. Catalysis depends on C187, which acts as the Proton donor/acceptor. Position 188 to 189 (188 to 189) interacts with substrate; sequence TH.

This sequence belongs to the aspartate/glutamate racemases family.

It carries out the reaction L-glutamate = D-glutamate. It functions in the pathway cell wall biogenesis; peptidoglycan biosynthesis. Provides the (R)-glutamate required for cell wall biosynthesis. This chain is Glutamate racemase, found in Bifidobacterium animalis subsp. lactis (strain AD011).